Reading from the N-terminus, the 87-residue chain is Serine rich endogenous peptide 17 (87 aa).

The N-terminal stretch at 1–28 (MTGKAPFFVILIAALLLLSSFFFGEVKA) is a signal peptide. A disordered region spans residues 32–87 (KQPKHRKLGNREGDENRSNEIVVQMKARVKRSKSKRGPQKKEPYKKPPCSPPTHPA). The segment covering 40 to 49 (GNREGDENRS) has biased composition (basic and acidic residues). Residues 51-71 (EIVVQMKARVKRSKSKRGPQK) carry the SCOOP motif motif. Residues 58–69 (ARVKRSKSKRGP) show a composition bias toward basic residues. A SxS motif essential for MIK2 binding motif is present at residues 63–65 (SKS). The segment covering 77–87 (KPPCSPPTHPA) has biased composition (pro residues).

It belongs to the serine rich endogenous peptide (SCOOP) phytocytokine family. In terms of assembly, interacts with MIK2 (via extracellular leucine-rich repeat domain); this interaction triggers the formation of complex between MIK2 and the BAK1/SERK3 and SERK4 coreceptors, and subsequent BAK1 activation by phosphorylation.

It is found in the cell membrane. The protein resides in the secreted. It localises to the extracellular space. Its subcellular location is the apoplast. Its function is as follows. Brassicaceae-specific phytocytokine (plant endogenous peptide released into the apoplast) perceived by MIK2 in a BAK1/SERK3 and SERK4 coreceptors-dependent manner, that modulates various physiological and antimicrobial processes including growth prevention and reactive oxygen species (ROS) response regulation. The chain is Serine rich endogenous peptide 17 from Arabidopsis thaliana (Mouse-ear cress).